A 340-amino-acid chain; its full sequence is Aspartate-semialdehyde dehydrogenase (340 aa).

Residues 11–14 (TGEV) and 39–40 (RS) each bind NADP(+). Arg100 is a binding site for phosphate. Residue Cys131 is the Acyl-thioester intermediate of the active site. Substrate is bound at residue Gln158. 161-162 (SG) lines the NADP(+) pocket. Lys216 is a phosphate binding site. Arg238 contacts substrate. His245 functions as the Proton acceptor in the catalytic mechanism. Residue Asn318 coordinates NADP(+).

The protein belongs to the aspartate-semialdehyde dehydrogenase family. As to quaternary structure, homodimer.

It catalyses the reaction L-aspartate 4-semialdehyde + phosphate + NADP(+) = 4-phospho-L-aspartate + NADPH + H(+). It functions in the pathway amino-acid biosynthesis; L-lysine biosynthesis via DAP pathway; (S)-tetrahydrodipicolinate from L-aspartate: step 2/4. The protein operates within amino-acid biosynthesis; L-methionine biosynthesis via de novo pathway; L-homoserine from L-aspartate: step 2/3. Its pathway is amino-acid biosynthesis; L-threonine biosynthesis; L-threonine from L-aspartate: step 2/5. In terms of biological role, catalyzes the NADPH-dependent formation of L-aspartate-semialdehyde (L-ASA) by the reductive dephosphorylation of L-aspartyl-4-phosphate. The protein is Aspartate-semialdehyde dehydrogenase of Aquifex aeolicus (strain VF5).